Here is a 264-residue protein sequence, read N- to C-terminus: Phosphatidylserine decarboxylase proenzyme (264 aa).

Residues Asp86, His142, and Ser226 each act as charge relay system; for autoendoproteolytic cleavage activity in the active site. Ser226 (schiff-base intermediate with substrate; via pyruvic acid; for decarboxylase activity) is an active-site residue. Residue Ser226 is modified to Pyruvic acid (Ser); by autocatalysis.

This sequence belongs to the phosphatidylserine decarboxylase family. PSD-B subfamily. Prokaryotic type I sub-subfamily. As to quaternary structure, heterodimer of a large membrane-associated beta subunit and a small pyruvoyl-containing alpha subunit. Pyruvate serves as cofactor. Is synthesized initially as an inactive proenzyme. Formation of the active enzyme involves a self-maturation process in which the active site pyruvoyl group is generated from an internal serine residue via an autocatalytic post-translational modification. Two non-identical subunits are generated from the proenzyme in this reaction, and the pyruvate is formed at the N-terminus of the alpha chain, which is derived from the carboxyl end of the proenzyme. The autoendoproteolytic cleavage occurs by a canonical serine protease mechanism, in which the side chain hydroxyl group of the serine supplies its oxygen atom to form the C-terminus of the beta chain, while the remainder of the serine residue undergoes an oxidative deamination to produce ammonia and the pyruvoyl prosthetic group on the alpha chain. During this reaction, the Ser that is part of the protease active site of the proenzyme becomes the pyruvoyl prosthetic group, which constitutes an essential element of the active site of the mature decarboxylase.

The protein resides in the cell membrane. The catalysed reaction is a 1,2-diacyl-sn-glycero-3-phospho-L-serine + H(+) = a 1,2-diacyl-sn-glycero-3-phosphoethanolamine + CO2. Its pathway is phospholipid metabolism; phosphatidylethanolamine biosynthesis; phosphatidylethanolamine from CDP-diacylglycerol: step 2/2. Its function is as follows. Catalyzes the formation of phosphatidylethanolamine (PtdEtn) from phosphatidylserine (PtdSer). In Geobacillus kaustophilus (strain HTA426), this protein is Phosphatidylserine decarboxylase proenzyme.